The sequence spans 906 residues: Protein translocase subunit SecA (906 aa).

ATP contacts are provided by residues Gln-86, 104–108, and Asp-511; that span reads GEGKT. A compositionally biased stretch (basic and acidic residues) spans 852 to 888; that stretch reads EHESVIDNNQRHDEDEQEEAPKVKQVRREGPKVKRND. Positions 852–906 are disordered; the sequence is EHESVIDNNQRHDEDEQEEAPKVKQVRREGPKVKRNDPCPCGSGKKYKQCHSKVE. Residues Cys-890, Cys-892, Cys-901, and His-902 each coordinate Zn(2+). A compositionally biased stretch (basic residues) spans 896–906; that stretch reads KKYKQCHSKVE.

Belongs to the SecA family. As to quaternary structure, monomer and homodimer. Part of the essential Sec protein translocation apparatus which comprises SecA, SecYEG and auxiliary proteins SecDF-YajC and YidC. The cofactor is Zn(2+).

The protein resides in the cell inner membrane. It localises to the cytoplasm. The enzyme catalyses ATP + H2O + cellular proteinSide 1 = ADP + phosphate + cellular proteinSide 2.. Part of the Sec protein translocase complex. Interacts with the SecYEG preprotein conducting channel. Has a central role in coupling the hydrolysis of ATP to the transfer of proteins into and across the cell membrane, serving both as a receptor for the preprotein-SecB complex and as an ATP-driven molecular motor driving the stepwise translocation of polypeptide chains across the membrane. The sequence is that of Protein translocase subunit SecA from Francisella tularensis subsp. tularensis (strain SCHU S4 / Schu 4).